The sequence spans 164 residues: Respiratory growth induced protein 2 (164 aa).

The protein belongs to the RGI1 family.

It localises to the cytoplasm. Involved in the control of energetic metabolism and significantly contribute to cell fitness, especially under respiratory growth conditions. The protein is Respiratory growth induced protein 2 (RGI2) of Saccharomyces cerevisiae (strain RM11-1a) (Baker's yeast).